The following is a 374-amino-acid chain: Alanine racemase (374 aa).

The active-site Proton acceptor; specific for D-alanine is the Lys34. Lys34 carries the N6-(pyridoxal phosphate)lysine modification. Residue Arg147 coordinates substrate. The Proton acceptor; specific for L-alanine role is filled by Tyr271. Met319 serves as a coordination point for substrate.

This sequence belongs to the alanine racemase family. Pyridoxal 5'-phosphate serves as cofactor.

The enzyme catalyses L-alanine = D-alanine. It functions in the pathway amino-acid biosynthesis; D-alanine biosynthesis; D-alanine from L-alanine: step 1/1. Catalyzes the interconversion of L-alanine and D-alanine. May also act on other amino acids. The polypeptide is Alanine racemase (alr) (Actinobacillus pleuropneumoniae serotype 5b (strain L20)).